Here is a 294-residue protein sequence, read N- to C-terminus: PAK4-inhibitor INKA2 (294 aa).

Disordered regions lie at residues 50-143 (ISGG…STLM), 170-198 (PELE…RELG), and 223-290 (LKEK…DINT). A compositionally biased stretch (polar residues) spans 85–99 (SPSNQASLGSTSSGK). Residues 134–177 (EPDDWTSTLMSRGRNRQPLVLGDNVFADLVGNWLDLPELEKGGE) are inka box. Residues 171 to 198 (ELEKGGEKGETGEAGEPKGGRGQPRELG) show a composition bias toward basic and acidic residues. The segment covering 241–253 (RSQKVKKRSHSKG) has biased composition (basic residues).

It belongs to the INKA family. As to quaternary structure, interacts with PAK4.

The protein resides in the nucleus. Its function is as follows. Inhibitor of the serine/threonine-protein kinase PAK4. Acts by binding PAK4 in a substrate-like manner, inhibiting the protein kinase activity. The chain is PAK4-inhibitor INKA2 from Bos taurus (Bovine).